We begin with the raw amino-acid sequence, 365 residues long: Chorismate synthase (365 aa).

Position 47 (arginine 47) interacts with NADP(+). FMN contacts are provided by residues 124-126, glycine 287, 302-306, and arginine 328; these read RAS and KPTAT.

It belongs to the chorismate synthase family. As to quaternary structure, homotetramer. The cofactor is FMNH2.

The enzyme catalyses 5-O-(1-carboxyvinyl)-3-phosphoshikimate = chorismate + phosphate. It participates in metabolic intermediate biosynthesis; chorismate biosynthesis; chorismate from D-erythrose 4-phosphate and phosphoenolpyruvate: step 7/7. Functionally, catalyzes the anti-1,4-elimination of the C-3 phosphate and the C-6 proR hydrogen from 5-enolpyruvylshikimate-3-phosphate (EPSP) to yield chorismate, which is the branch point compound that serves as the starting substrate for the three terminal pathways of aromatic amino acid biosynthesis. This reaction introduces a second double bond into the aromatic ring system. The protein is Chorismate synthase of Prochlorococcus marinus (strain MIT 9215).